Here is a 353-residue protein sequence, read N- to C-terminus: S-adenosylmethionine:tRNA ribosyltransferase-isomerase (353 aa).

It belongs to the QueA family. As to quaternary structure, monomer.

It localises to the cytoplasm. It catalyses the reaction 7-aminomethyl-7-carbaguanosine(34) in tRNA + S-adenosyl-L-methionine = epoxyqueuosine(34) in tRNA + adenine + L-methionine + 2 H(+). It functions in the pathway tRNA modification; tRNA-queuosine biosynthesis. Its function is as follows. Transfers and isomerizes the ribose moiety from AdoMet to the 7-aminomethyl group of 7-deazaguanine (preQ1-tRNA) to give epoxyqueuosine (oQ-tRNA). The sequence is that of S-adenosylmethionine:tRNA ribosyltransferase-isomerase from Rickettsia bellii (strain OSU 85-389).